The following is a 147-amino-acid chain: MRTYSPKPGDVTRQWHIIDAQDIVLGRLATTAANLLRGKHKAIYAPHMDMGDFVIIINADKVHLSGNKKTQKMAYRHSGFPGGLRSVRYDELLAKNPEKAVEKAIKGMIPKNTLGRQMLSKLKVYAGDQHPHAAQQPVPFEITQVAQ.

Belongs to the universal ribosomal protein uL13 family. As to quaternary structure, part of the 50S ribosomal subunit.

In terms of biological role, this protein is one of the early assembly proteins of the 50S ribosomal subunit, although it is not seen to bind rRNA by itself. It is important during the early stages of 50S assembly. The polypeptide is Large ribosomal subunit protein uL13 (Streptomyces griseus subsp. griseus (strain JCM 4626 / CBS 651.72 / NBRC 13350 / KCC S-0626 / ISP 5235)).